A 311-amino-acid chain; its full sequence is GPN-loop GTPase 2 (311 aa).

20–25 (GSGKTT) is a GTP binding site. The short motif at 77 to 79 (GPN) is the Gly-Pro-Asn (GPN)-loop; involved in dimer interface element. 179 to 182 (SKMD) is a GTP binding site.

This sequence belongs to the GPN-loop GTPase family. As to quaternary structure, heterodimers with gpn1 or gpn3. Binds to RNA polymerase II (RNAPII).

Functionally, small GTPase required for proper localization of RNA polymerase II and III (RNAPII and RNAPIII). May act at an RNAP assembly step prior to nuclear import. This Danio rerio (Zebrafish) protein is GPN-loop GTPase 2.